A 509-amino-acid chain; its full sequence is Maturase K (509 aa).

This sequence belongs to the intron maturase 2 family. MatK subfamily.

The protein resides in the plastid. It is found in the chloroplast. In terms of biological role, usually encoded in the trnK tRNA gene intron. Probably assists in splicing its own and other chloroplast group II introns. This is Maturase K from Ibicella lutea (Yellow unicorn-plant).